Reading from the N-terminus, the 398-residue chain is MTVESTAAPAKVNLMGLSQAKLEAFFDSLGEKRFRATQVLKWIHQMGVTDFEQMTNISKPLRDKLSQVAEAVAPEVVNQWDSSDGTRKFLIRVGGGNAVETVYIPDGDRGTLCVSSQVGCSLDCSFCATGKQGFNRDLTAAEIIGQVWQAAKSFNQFGVGAQRKITNVVMMGMGEPLLNFDNVVDSMNLMMHDNCYGLSKRRVTLSTSGVVPALDKLGEYTDACLAISLHAPNNALRNELVPINKKYPIEMLLASAKRYIDGLPDVRRKMTIEYTLIDQVNDRPEHAHELAELLKDIPVKINLIPFNPFNLSNYKRVSNNALRRFQQILIDAGYTTTVRTTRGDDIDAACGQLAGQVNDRTKRSQRYKIDKNALDASNADIIPVKLVDEADVSITFNG.

Glu100 functions as the Proton acceptor in the catalytic mechanism. One can recognise a Radical SAM core domain in the interval 106–345; that stretch reads DGDRGTLCVS…TTVRTTRGDD (240 aa). A disulfide bridge connects residues Cys113 and Cys350. Residues Cys120, Cys124, and Cys127 each coordinate [4Fe-4S] cluster. S-adenosyl-L-methionine-binding positions include 174–175, Ser206, 228–230, and Asn307; these read GE and SLH. Cys350 (S-methylcysteine intermediate) is an active-site residue.

It belongs to the radical SAM superfamily. RlmN family. [4Fe-4S] cluster serves as cofactor.

It localises to the cytoplasm. It carries out the reaction adenosine(2503) in 23S rRNA + 2 reduced [2Fe-2S]-[ferredoxin] + 2 S-adenosyl-L-methionine = 2-methyladenosine(2503) in 23S rRNA + 5'-deoxyadenosine + L-methionine + 2 oxidized [2Fe-2S]-[ferredoxin] + S-adenosyl-L-homocysteine. The enzyme catalyses adenosine(37) in tRNA + 2 reduced [2Fe-2S]-[ferredoxin] + 2 S-adenosyl-L-methionine = 2-methyladenosine(37) in tRNA + 5'-deoxyadenosine + L-methionine + 2 oxidized [2Fe-2S]-[ferredoxin] + S-adenosyl-L-homocysteine. Specifically methylates position 2 of adenine 2503 in 23S rRNA and position 2 of adenine 37 in tRNAs. m2A2503 modification seems to play a crucial role in the proofreading step occurring at the peptidyl transferase center and thus would serve to optimize ribosomal fidelity. The polypeptide is Dual-specificity RNA methyltransferase RlmN (Saccharophagus degradans (strain 2-40 / ATCC 43961 / DSM 17024)).